A 55-amino-acid chain; its full sequence is Ferredoxin (55 aa).

2 4Fe-4S ferredoxin-type domains span residues 2-27 and 28-55; these read FVINDSCVSCGACAGECPVSAITQGD and TQFVIDADTCIDCGNCANVCPVGAPNQE. [4Fe-4S] cluster is bound by residues C8, C11, C14, C18, C37, C40, C43, and C47.

[4Fe-4S] cluster serves as cofactor.

In terms of biological role, ferredoxins are iron-sulfur proteins that transfer electrons in a wide variety of metabolic reactions. In Clostridium butyricum, this protein is Ferredoxin.